The sequence spans 202 residues: Recombination protein RecR (202 aa).

The C4-type zinc-finger motif lies at 56-71 (CRVCGNLDSADPCSVC). The Toprim domain occupies 79 to 179 (GLICVVESVG…SVTRLAQGIP (101 aa)).

The protein belongs to the RecR family.

Functionally, may play a role in DNA repair. It seems to be involved in an RecBC-independent recombinational process of DNA repair. It may act with RecF and RecO. The sequence is that of Recombination protein RecR from Granulibacter bethesdensis (strain ATCC BAA-1260 / CGDNIH1).